We begin with the raw amino-acid sequence, 427 residues long: Methylenetetrahydrofolate--tRNA-(uracil-5-)-methyltransferase TrmFO (427 aa).

Residue glycine 8–glycine 13 participates in FAD binding.

Belongs to the MnmG family. TrmFO subfamily. Requires FAD as cofactor.

The protein resides in the cytoplasm. It carries out the reaction uridine(54) in tRNA + (6R)-5,10-methylene-5,6,7,8-tetrahydrofolate + NADH + H(+) = 5-methyluridine(54) in tRNA + (6S)-5,6,7,8-tetrahydrofolate + NAD(+). The catalysed reaction is uridine(54) in tRNA + (6R)-5,10-methylene-5,6,7,8-tetrahydrofolate + NADPH + H(+) = 5-methyluridine(54) in tRNA + (6S)-5,6,7,8-tetrahydrofolate + NADP(+). In terms of biological role, catalyzes the folate-dependent formation of 5-methyl-uridine at position 54 (M-5-U54) in all tRNAs. This chain is Methylenetetrahydrofolate--tRNA-(uracil-5-)-methyltransferase TrmFO, found in Mycoplasmopsis agalactiae (strain NCTC 10123 / CIP 59.7 / PG2) (Mycoplasma agalactiae).